The following is a 147-amino-acid chain: MSASSPSSAAPDDVEEGLVLRPKFDANGLITCVTTDATSGDVLMVAFMNAEALQKTIDSGDAWYFSRSRAKLWRKGESSGLVQKVLEMRLDCDQDAVWIKVEQGGGAACHTGRRSCFYRRIDRDDTGAPLLTPVDAERLFDPAKVYR.

Asp91 contributes to the Mg(2+) binding site. Cys92 is a binding site for Zn(2+). The Mg(2+) site is built by Asp93 and Asp95. Zn(2+) is bound by residues Cys109 and Cys116.

Belongs to the PRA-CH family. In terms of assembly, homodimer. Mg(2+) is required as a cofactor. Requires Zn(2+) as cofactor.

The protein localises to the cytoplasm. It catalyses the reaction 1-(5-phospho-beta-D-ribosyl)-5'-AMP + H2O = 1-(5-phospho-beta-D-ribosyl)-5-[(5-phospho-beta-D-ribosylamino)methylideneamino]imidazole-4-carboxamide. It functions in the pathway amino-acid biosynthesis; L-histidine biosynthesis; L-histidine from 5-phospho-alpha-D-ribose 1-diphosphate: step 3/9. Catalyzes the hydrolysis of the adenine ring of phosphoribosyl-AMP. This Rhodopseudomonas palustris (strain BisA53) protein is Phosphoribosyl-AMP cyclohydrolase.